Consider the following 347-residue polypeptide: 3-isopropylmalate dehydrogenase (347 aa).

Residue 76–87 (GPKWTDPNNRPE) coordinates NAD(+). Substrate contacts are provided by Arg-94, Arg-104, Arg-132, and Asp-217. 3 residues coordinate Mg(2+): Asp-217, Asp-241, and Asp-245. 275 to 287 (GSAPDIANEDKAN) contributes to the NAD(+) binding site.

This sequence belongs to the isocitrate and isopropylmalate dehydrogenases family. LeuB type 1 subfamily. As to quaternary structure, homodimer. It depends on Mg(2+) as a cofactor. The cofactor is Mn(2+).

Its subcellular location is the cytoplasm. The catalysed reaction is (2R,3S)-3-isopropylmalate + NAD(+) = 4-methyl-2-oxopentanoate + CO2 + NADH. Its pathway is amino-acid biosynthesis; L-leucine biosynthesis; L-leucine from 3-methyl-2-oxobutanoate: step 3/4. Catalyzes the oxidation of 3-carboxy-2-hydroxy-4-methylpentanoate (3-isopropylmalate) to 3-carboxy-4-methyl-2-oxopentanoate. The product decarboxylates to 4-methyl-2 oxopentanoate. The protein is 3-isopropylmalate dehydrogenase of Staphylococcus epidermidis (strain ATCC 12228 / FDA PCI 1200).